A 209-amino-acid polypeptide reads, in one-letter code: Urease accessory protein UreG (209 aa).

16-23 (GPVGSGKT) contacts GTP.

Belongs to the SIMIBI class G3E GTPase family. UreG subfamily. Homodimer. UreD, UreF and UreG form a complex that acts as a GTP-hydrolysis-dependent molecular chaperone, activating the urease apoprotein by helping to assemble the nickel containing metallocenter of UreC. The UreE protein probably delivers the nickel.

It localises to the cytoplasm. In terms of biological role, facilitates the functional incorporation of the urease nickel metallocenter. This process requires GTP hydrolysis, probably effectuated by UreG. The polypeptide is Urease accessory protein UreG (Blochmanniella floridana).